Here is a 593-residue protein sequence, read N- to C-terminus: Aspartate--tRNA(Asp/Asn) ligase (593 aa).

L-aspartate is bound at residue glutamate 172. An aspartate region spans residues glutamine 196 to lysine 199. Arginine 218 contacts L-aspartate. Residues arginine 218–glutamate 220 and glutamine 227 each bind ATP. Histidine 450 is an L-aspartate binding site. Glutamate 484 lines the ATP pocket. An L-aspartate-binding site is contributed by arginine 491. Glycine 536–arginine 539 is a binding site for ATP.

The protein belongs to the class-II aminoacyl-tRNA synthetase family. Type 1 subfamily. Homodimer.

It is found in the cytoplasm. It carries out the reaction tRNA(Asx) + L-aspartate + ATP = L-aspartyl-tRNA(Asx) + AMP + diphosphate. Its function is as follows. Aspartyl-tRNA synthetase with relaxed tRNA specificity since it is able to aspartylate not only its cognate tRNA(Asp) but also tRNA(Asn). Reaction proceeds in two steps: L-aspartate is first activated by ATP to form Asp-AMP and then transferred to the acceptor end of tRNA(Asp/Asn). This Nitrosomonas europaea (strain ATCC 19718 / CIP 103999 / KCTC 2705 / NBRC 14298) protein is Aspartate--tRNA(Asp/Asn) ligase.